The chain runs to 268 residues: Octanoyltransferase (268 aa).

Residues 49 to 237 (GTQGDVILVV…ALLKALSGEL (189 aa)) enclose the BPL/LPL catalytic domain. Residues 87–94 (RGGRITWH), 167–169 (ALG), and 180–182 (GLA) contribute to the substrate site. The active-site Acyl-thioester intermediate is Cys-198.

The protein belongs to the LipB family.

It localises to the cytoplasm. It carries out the reaction octanoyl-[ACP] + L-lysyl-[protein] = N(6)-octanoyl-L-lysyl-[protein] + holo-[ACP] + H(+). Its pathway is protein modification; protein lipoylation via endogenous pathway; protein N(6)-(lipoyl)lysine from octanoyl-[acyl-carrier-protein]: step 1/2. Its function is as follows. Catalyzes the transfer of endogenously produced octanoic acid from octanoyl-acyl-carrier-protein onto the lipoyl domains of lipoate-dependent enzymes. Lipoyl-ACP can also act as a substrate although octanoyl-ACP is likely to be the physiological substrate. The sequence is that of Octanoyltransferase from Corynebacterium aurimucosum (strain ATCC 700975 / DSM 44827 / CIP 107346 / CN-1) (Corynebacterium nigricans).